The chain runs to 277 residues: Sulfur carrier protein FdhD (277 aa).

Cys123 acts as the Cysteine persulfide intermediate in catalysis.

Belongs to the FdhD family.

Its subcellular location is the cytoplasm. Functionally, required for formate dehydrogenase (FDH) activity. Acts as a sulfur carrier protein that transfers sulfur from IscS to the molybdenum cofactor prior to its insertion into FDH. The polypeptide is Sulfur carrier protein FdhD (Pectobacterium atrosepticum (strain SCRI 1043 / ATCC BAA-672) (Erwinia carotovora subsp. atroseptica)).